The following is a 323-amino-acid chain: MVTILDTINPDAKRVRHPEKAHRPDTEVMRKPDWIRVKAPTSKGYAETRAIVKEHKLVTVCEEAGCPNIGECWDKKHATFMIMGEICTRACAFCNVATGKPNALDMDEPENVAKAVREMGLSHVVITSVDRDDLEDGGAEHFEKVIWAIRSASPATTIEILTPDFLKKPGALERVVAAKPDVFNHNMETVAGNYLTVRPGARYFHSIRLLQRVKELDPTMFTKSGIMVGLGEERNEVLQLMDDLRTADVDFLTIGQYLQPTRKHHKVESFVTPEEFKSYETVAYSKGFLMVASSPLTRSSHHAGDDFARLRAAREKKLLMAAE.

[4Fe-4S] cluster contacts are provided by Cys-61, Cys-66, Cys-72, Cys-87, Cys-91, Cys-94, and Ser-300. The Radical SAM core domain occupies 73-289 (WDKKHATFMI…ETVAYSKGFL (217 aa)).

It belongs to the radical SAM superfamily. Lipoyl synthase family. [4Fe-4S] cluster is required as a cofactor.

The protein resides in the cytoplasm. The catalysed reaction is [[Fe-S] cluster scaffold protein carrying a second [4Fe-4S](2+) cluster] + N(6)-octanoyl-L-lysyl-[protein] + 2 oxidized [2Fe-2S]-[ferredoxin] + 2 S-adenosyl-L-methionine + 4 H(+) = [[Fe-S] cluster scaffold protein] + N(6)-[(R)-dihydrolipoyl]-L-lysyl-[protein] + 4 Fe(3+) + 2 hydrogen sulfide + 2 5'-deoxyadenosine + 2 L-methionine + 2 reduced [2Fe-2S]-[ferredoxin]. It participates in protein modification; protein lipoylation via endogenous pathway; protein N(6)-(lipoyl)lysine from octanoyl-[acyl-carrier-protein]: step 2/2. Catalyzes the radical-mediated insertion of two sulfur atoms into the C-6 and C-8 positions of the octanoyl moiety bound to the lipoyl domains of lipoate-dependent enzymes, thereby converting the octanoylated domains into lipoylated derivatives. This is Lipoyl synthase from Rhizobium etli (strain ATCC 51251 / DSM 11541 / JCM 21823 / NBRC 15573 / CFN 42).